Consider the following 504-residue polypeptide: Cholesterol 7-alpha-monooxygenase (504 aa).

C444 is a binding site for heme.

This sequence belongs to the cytochrome P450 family. It depends on heme as a cofactor.

It is found in the endoplasmic reticulum membrane. Its subcellular location is the microsome membrane. It catalyses the reaction cholesterol + reduced [NADPH--hemoprotein reductase] + O2 = 7alpha-hydroxycholesterol + oxidized [NADPH--hemoprotein reductase] + H2O + H(+). The protein operates within lipid metabolism; bile acid biosynthesis. Functionally, catalyzes a rate-limiting step in cholesterol catabolism and bile acid biosynthesis by introducing a hydrophilic moiety at position 7 of cholesterol. Important for cholesterol homeostasis. This is Cholesterol 7-alpha-monooxygenase (CYP7A1) from Cricetulus griseus (Chinese hamster).